A 273-amino-acid chain; its full sequence is Dermonecrotic toxin LspaSicTox-alphaIA2i (273 aa).

H5 is a catalytic residue. Mg(2+) contacts are provided by E25 and D27. The active-site Nucleophile is the H41. 2 disulfide bridges follow: C45-C51 and C47-C190. D85 lines the Mg(2+) pocket.

The protein belongs to the arthropod phospholipase D family. Class II subfamily. Mg(2+) serves as cofactor. In terms of tissue distribution, expressed by the venom gland.

The protein resides in the secreted. It carries out the reaction an N-(acyl)-sphingosylphosphocholine = an N-(acyl)-sphingosyl-1,3-cyclic phosphate + choline. The catalysed reaction is an N-(acyl)-sphingosylphosphoethanolamine = an N-(acyl)-sphingosyl-1,3-cyclic phosphate + ethanolamine. It catalyses the reaction a 1-acyl-sn-glycero-3-phosphocholine = a 1-acyl-sn-glycero-2,3-cyclic phosphate + choline. The enzyme catalyses a 1-acyl-sn-glycero-3-phosphoethanolamine = a 1-acyl-sn-glycero-2,3-cyclic phosphate + ethanolamine. In terms of biological role, dermonecrotic toxins cleave the phosphodiester linkage between the phosphate and headgroup of certain phospholipids (sphingolipid and lysolipid substrates), forming an alcohol (often choline) and a cyclic phosphate. This toxin acts on sphingomyelin (SM). It may also act on ceramide phosphoethanolamine (CPE), lysophosphatidylcholine (LPC) and lysophosphatidylethanolamine (LPE), but not on lysophosphatidylserine (LPS), and lysophosphatidylglycerol (LPG). It acts by transphosphatidylation, releasing exclusively cyclic phosphate products as second products. Induces dermonecrosis, hemolysis, increased vascular permeability, edema, inflammatory response, and platelet aggregation. The chain is Dermonecrotic toxin LspaSicTox-alphaIA2i from Loxosceles spadicea (Recluse spider).